The following is a 262-amino-acid chain: Glycine and serine-rich protein 1 (262 aa).

A signal peptide spans 1–21; it reads MVIKTSLTVLILGVLIAEVFC. Asparagine 59 carries an N-linked (GlcNAc...) asparagine glycan. Residues 172–212 form a disordered region; it reads SNGGWGAETGSSGGMNSQSSGSQSGSWGSSSGSWGGSSGSM. Gly residues predominate over residues 174–184; that stretch reads GGWGAETGSSG. Residues 185 to 203 are compositionally biased toward low complexity; the sequence is GMNSQSSGSQSGSWGSSSG.

In terms of tissue distribution, component of the acid-insoluble and acid-soluble organic matrix of calcified layers of the shell (at protein level).

Its subcellular location is the secreted. The chain is Glycine and serine-rich protein 1 from Lottia gigantea (Giant owl limpet).